The sequence spans 284 residues: Pollen allergen Phl p 5b (284 aa).

The signal sequence occupies residues 1–19; that stretch reads AAAAVPRRGPRGGPGRSYT. The interval 1–21 is disordered; it reads AAAAVPRRGPRGGPGRSYTAD.

Belongs to the Poa p IX/Phl p VI allergen family. In terms of assembly, homodimer; disulfide-linked.

Functionally, has ribonuclease activity. May be involved in host-pathogen interactions. This chain is Pollen allergen Phl p 5b, found in Phleum pratense (Common timothy).